The following is a 694-amino-acid chain: Transcription activator of gluconeogenesis PTRG_06536 (694 aa).

Residues 1–57 form a disordered region; sequence MTTPDAEDASPSPEYRSDQDDDMAAEQTTDRQSGDASPTQKPANGKPNAKDPLRPRR. The zn(2)-C6 fungal-type DNA-binding region spans 64–92; the sequence is CFACQRAHLTCGDERPCGRCIKRGLQDHC. 4 disordered regions span residues 175-216, 289-369, 384-420, and 539-569; these read FSNQ…FGPL, AMAF…GDNP, AQRS…RDTK, and VNLG…SEGA. Over residues 193–204 the composition is skewed to polar residues; that stretch reads SVQNAGAPSTMS. The span at 205–214 shows a compositional bias: low complexity; that stretch reads QGQQGMQQFG. Polar residues predominate over residues 302-324; that stretch reads WQETQSRQGSMHVHTPNNTSGSG. Over residues 349–363 the composition is skewed to low complexity; that stretch reads ATHSTASPASTDAST. Residues 392-408 show a composition bias toward polar residues; the sequence is RPQQENRPPTTALQSIH. The region spanning 485 to 559 is the PAS domain; the sequence is LQRHLMTLQE…SDTSTQNTTP (75 aa).

The protein belongs to the ERT1/acuK family.

Its subcellular location is the nucleus. In terms of biological role, transcription factor which regulates nonfermentable carbon utilization. Activator of gluconeogenetic genes. The sequence is that of Transcription activator of gluconeogenesis PTRG_06536 from Pyrenophora tritici-repentis (strain Pt-1C-BFP) (Wheat tan spot fungus).